Reading from the N-terminus, the 378-residue chain is Erythronate-4-phosphate dehydrogenase (378 aa).

Substrate is bound by residues S45 and T66. D146 and T175 together coordinate NAD(+). Residue R208 is part of the active site. D232 is a binding site for NAD(+). Residue E237 is part of the active site. The active-site Proton donor is H254. G257 contributes to the NAD(+) binding site. A substrate-binding site is contributed by Y258.

The protein belongs to the D-isomer specific 2-hydroxyacid dehydrogenase family. PdxB subfamily. Homodimer.

The protein resides in the cytoplasm. It catalyses the reaction 4-phospho-D-erythronate + NAD(+) = (R)-3-hydroxy-2-oxo-4-phosphooxybutanoate + NADH + H(+). It functions in the pathway cofactor biosynthesis; pyridoxine 5'-phosphate biosynthesis; pyridoxine 5'-phosphate from D-erythrose 4-phosphate: step 2/5. Its function is as follows. Catalyzes the oxidation of erythronate-4-phosphate to 3-hydroxy-2-oxo-4-phosphonooxybutanoate. The protein is Erythronate-4-phosphate dehydrogenase of Escherichia coli O6:K15:H31 (strain 536 / UPEC).